Consider the following 546-residue polypeptide: Chaperonin GroEL (546 aa).

ATP is bound by residues 30–33 (TLGP), Lys51, 87–91 (DGTTT), Gly415, and Asp495.

The protein belongs to the chaperonin (HSP60) family. In terms of assembly, forms a cylinder of 14 subunits composed of two heptameric rings stacked back-to-back. Interacts with the co-chaperonin GroES.

It localises to the cytoplasm. The enzyme catalyses ATP + H2O + a folded polypeptide = ADP + phosphate + an unfolded polypeptide.. Its function is as follows. Together with its co-chaperonin GroES, plays an essential role in assisting protein folding. The GroEL-GroES system forms a nano-cage that allows encapsulation of the non-native substrate proteins and provides a physical environment optimized to promote and accelerate protein folding. This chain is Chaperonin GroEL, found in Brucella anthropi (strain ATCC 49188 / DSM 6882 / CCUG 24695 / JCM 21032 / LMG 3331 / NBRC 15819 / NCTC 12168 / Alc 37) (Ochrobactrum anthropi).